Reading from the N-terminus, the 193-residue chain is Potassium-transporting ATPase KdpC subunit (193 aa).

A helical membrane pass occupies residues 14-34 (ITFTFLVLCGLVYPLIVTGIA).

The protein belongs to the KdpC family. As to quaternary structure, the system is composed of three essential subunits: KdpA, KdpB and KdpC.

It localises to the cell membrane. Part of the high-affinity ATP-driven potassium transport (or Kdp) system, which catalyzes the hydrolysis of ATP coupled with the electrogenic transport of potassium into the cytoplasm. This subunit acts as a catalytic chaperone that increases the ATP-binding affinity of the ATP-hydrolyzing subunit KdpB by the formation of a transient KdpB/KdpC/ATP ternary complex. This is Potassium-transporting ATPase KdpC subunit from Bacillus anthracis (strain A0248).